The primary structure comprises 337 residues: Protein ABHD13 (337 aa).

Residues 37–57 traverse the membrane as a helical; Signal-anchor for type II membrane protein segment; the sequence is FHLYGGIILLLLIFISIAGIL. Residues S193, D268, and H298 each act as charge relay system in the active site. Residue N299 is glycosylated (N-linked (GlcNAc...) asparagine).

The protein belongs to the serine esterase family.

Its subcellular location is the membrane. This Homo sapiens (Human) protein is Protein ABHD13.